Consider the following 400-residue polypeptide: 8-amino-7-oxononanoate synthase (400 aa).

R21 serves as a coordination point for substrate. Position 112–113 (112–113 (GY)) interacts with pyridoxal 5'-phosphate. Substrate is bound at residue H137. S183, H211, and T239 together coordinate pyridoxal 5'-phosphate. An N6-(pyridoxal phosphate)lysine modification is found at K242. T358 contributes to the substrate binding site.

Belongs to the class-II pyridoxal-phosphate-dependent aminotransferase family. BioF subfamily. Homodimer. Requires pyridoxal 5'-phosphate as cofactor.

The catalysed reaction is 6-carboxyhexanoyl-[ACP] + L-alanine + H(+) = (8S)-8-amino-7-oxononanoate + holo-[ACP] + CO2. Its pathway is cofactor biosynthesis; biotin biosynthesis. Catalyzes the decarboxylative condensation of pimeloyl-[acyl-carrier protein] and L-alanine to produce 8-amino-7-oxononanoate (AON), [acyl-carrier protein], and carbon dioxide. In Burkholderia lata (strain ATCC 17760 / DSM 23089 / LMG 22485 / NCIMB 9086 / R18194 / 383), this protein is 8-amino-7-oxononanoate synthase.